Consider the following 333-residue polypeptide: DNA-directed RNA polymerase subunit alpha (333 aa).

The segment at 1–234 (MQSSVNEFLT…QQLAAFVDLK (234 aa)) is alpha N-terminal domain (alpha-NTD). The interval 248–333 (IDPILLRPVD…SLKKDDKATA (86 aa)) is alpha C-terminal domain (alpha-CTD).

Belongs to the RNA polymerase alpha chain family. Homodimer. The RNAP catalytic core consists of 2 alpha, 1 beta, 1 beta' and 1 omega subunit. When a sigma factor is associated with the core the holoenzyme is formed, which can initiate transcription.

It carries out the reaction RNA(n) + a ribonucleoside 5'-triphosphate = RNA(n+1) + diphosphate. Its function is as follows. DNA-dependent RNA polymerase catalyzes the transcription of DNA into RNA using the four ribonucleoside triphosphates as substrates. This Pseudomonas aeruginosa (strain UCBPP-PA14) protein is DNA-directed RNA polymerase subunit alpha.